The primary structure comprises 148 residues: Snaclec 8 (148 aa).

The signal sequence occupies residues Met-1 to Ala-23. The C-type lectin domain maps to Tyr-34–Gly-148.

The protein belongs to the snaclec family. As to quaternary structure, heterodimer; disulfide-linked. Post-translationally, contains disulfide bonds. As to expression, expressed by the venom gland.

It localises to the secreted. In terms of biological role, interferes with one step of hemostasis (modulation of platelet aggregation, or coagulation cascade, for example). This chain is Snaclec 8, found in Echis carinatus sochureki (Saw-scaled viper).